The primary structure comprises 141 residues: MAIILGADAHGNALKELIKSFLQEESYDIIDVTDINSDFIDNTLAVAKAVNEAEGRLGIMVDAYGAGPFMVATKLKGMVAAEVSDERSAYMTRGHNNARMITIGAEIVGPELAKNIVKGFVTGPYDGGRHQIRVDMLNKMA.

Belongs to the LacAB/RpiB family. In terms of assembly, heteromultimeric protein consisting of LacA and LacB.

It carries out the reaction aldehydo-D-galactose 6-phosphate = keto-D-tagatose 6-phosphate. It functions in the pathway carbohydrate metabolism; D-galactose 6-phosphate degradation; D-tagatose 6-phosphate from D-galactose 6-phosphate: step 1/1. This is Galactose-6-phosphate isomerase subunit LacA 1 from Streptococcus pyogenes serotype M3 (strain SSI-1).